The chain runs to 644 residues: Exoribonuclease 2 (644 aa).

The region spanning 189-516 (REDLTALNFV…NHRLLKAIIT (328 aa)) is the RNB domain. The S1 motif domain maps to 561–643 (DTRFPAEIID…ETRNVVARPV (83 aa)).

It belongs to the RNR ribonuclease family. RNase II subfamily.

Its subcellular location is the cytoplasm. It carries out the reaction Exonucleolytic cleavage in the 3'- to 5'-direction to yield nucleoside 5'-phosphates.. In terms of biological role, involved in mRNA degradation. Hydrolyzes single-stranded polyribonucleotides processively in the 3' to 5' direction. The sequence is that of Exoribonuclease 2 from Yersinia enterocolitica serotype O:8 / biotype 1B (strain NCTC 13174 / 8081).